Reading from the N-terminus, the 155-residue chain is Cytochrome c-type biogenesis protein CcmE (155 aa).

The Cytoplasmic segment spans residues 1-8 (MNPVRKKR). A helical; Signal-anchor for type II membrane protein transmembrane segment spans residues 9–29 (LFIVLAILAGVGIAVALALSA). Over 30–155 (LQQNINLFYT…YEGGKQEYAK (126 aa)) the chain is Periplasmic. Heme contacts are provided by His-124 and Tyr-128.

This sequence belongs to the CcmE/CycJ family.

The protein localises to the cell inner membrane. Its function is as follows. Heme chaperone required for the biogenesis of c-type cytochromes. Transiently binds heme delivered by CcmC and transfers the heme to apo-cytochromes in a process facilitated by CcmF and CcmH. This chain is Cytochrome c-type biogenesis protein CcmE, found in Stutzerimonas stutzeri (strain A1501) (Pseudomonas stutzeri).